The sequence spans 63 residues: Large ribosomal subunit protein uL29 (63 aa).

Belongs to the universal ribosomal protein uL29 family.

The sequence is that of Large ribosomal subunit protein uL29 from Vibrio vulnificus (strain CMCP6).